A 253-amino-acid polypeptide reads, in one-letter code: Ipsdienol dehydrogenase (253 aa).

Residues 12 to 40 (VTGG…FSRN) and Asp-63 each bind NAD(+). Ser-149 lines the substrate pocket. The active-site Proton acceptor is Tyr-162. Lys-166 is an NAD(+) binding site.

It belongs to the short-chain dehydrogenases/reductases (SDR) family. As to expression, specifically expressed in male midguts. Expressed at higher level in the anterior midgut of fed males.

The protein localises to the cytoplasm. It localises to the cytosol. It carries out the reaction (4R)-ipsdienol + NADP(+) = ipsdienone + NADPH + H(+). It catalyses the reaction (4R)-ipsdienol + NAD(+) = ipsdienone + NADH + H(+). Its function is as follows. Catalyzes the oxidation of racemic ipsdienol and (4R)-(-)-ipsdienol to form ipsdienone (2-methyl-6-methylene-2,7-octadien-4-one), an intermediate in the biosynthesis of pheromonal ipsdienol in male pine engraver beetles. In contrast, (4S)-(+)-ipsdienol is not a substrate. This Ips pini (Pine engraver beetle) protein is Ipsdienol dehydrogenase.